The chain runs to 379 residues: Cytochrome b (379 aa).

4 consecutive transmembrane segments (helical) span residues 33 to 53 (FGSL…FLAM), 77 to 98 (WLIR…FIHV), 113 to 133 (WNIG…GYVL), and 178 to 198 (FFAF…VHLL). The heme b site is built by His83 and His97. Positions 182 and 196 each coordinate heme b. An a ubiquinone-binding site is contributed by His201. 4 consecutive transmembrane segments (helical) span residues 226 to 246 (IKDL…ALFF), 288 to 308 (LGGV…PLLN), 320 to 340 (VTQT…WIGG), and 347 to 367 (FTMI…VLMP).

This sequence belongs to the cytochrome b family. The cytochrome bc1 complex contains 11 subunits: 3 respiratory subunits (MT-CYB, CYC1 and UQCRFS1), 2 core proteins (UQCRC1 and UQCRC2) and 6 low-molecular weight proteins (UQCRH/QCR6, UQCRB/QCR7, UQCRQ/QCR8, UQCR10/QCR9, UQCR11/QCR10 and a cleavage product of UQCRFS1). This cytochrome bc1 complex then forms a dimer. The cofactor is heme b.

Its subcellular location is the mitochondrion inner membrane. Functionally, component of the ubiquinol-cytochrome c reductase complex (complex III or cytochrome b-c1 complex) that is part of the mitochondrial respiratory chain. The b-c1 complex mediates electron transfer from ubiquinol to cytochrome c. Contributes to the generation of a proton gradient across the mitochondrial membrane that is then used for ATP synthesis. The protein is Cytochrome b (MT-CYB) of Akodon iniscatus (Intelligent grass mouse).